The chain runs to 298 residues: Glutamyl-Q tRNA(Asp) synthetase (298 aa).

L-glutamate is bound by residues 9-13 and glutamate 45; that span reads RFAPS. Positions 12 to 22 match the 'HIGH' region motif; that stretch reads PSPSGELHFGS. The Zn(2+) site is built by cysteine 101, cysteine 103, tyrosine 115, and cysteine 119. Residues tyrosine 172 and arginine 190 each contribute to the L-glutamate site. Residues 228–232 carry the 'KMSKS' region motif; sequence KLSKQ. Lysine 231 contributes to the ATP binding site.

The protein belongs to the class-I aminoacyl-tRNA synthetase family. GluQ subfamily. Requires Zn(2+) as cofactor.

Catalyzes the tRNA-independent activation of glutamate in presence of ATP and the subsequent transfer of glutamate onto a tRNA(Asp). Glutamate is transferred on the 2-amino-5-(4,5-dihydroxy-2-cyclopenten-1-yl) moiety of the queuosine in the wobble position of the QUC anticodon. The chain is Glutamyl-Q tRNA(Asp) synthetase from Cronobacter sakazakii (strain ATCC BAA-894) (Enterobacter sakazakii).